A 598-amino-acid polypeptide reads, in one-letter code: Elongation factor 4 (598 aa).

The tr-type G domain maps to Lys2–Val184. GTP is bound by residues Asp14 to Thr19 and Asn131 to Asp134.

Belongs to the TRAFAC class translation factor GTPase superfamily. Classic translation factor GTPase family. LepA subfamily.

It is found in the cell inner membrane. It carries out the reaction GTP + H2O = GDP + phosphate + H(+). Functionally, required for accurate and efficient protein synthesis under certain stress conditions. May act as a fidelity factor of the translation reaction, by catalyzing a one-codon backward translocation of tRNAs on improperly translocated ribosomes. Back-translocation proceeds from a post-translocation (POST) complex to a pre-translocation (PRE) complex, thus giving elongation factor G a second chance to translocate the tRNAs correctly. Binds to ribosomes in a GTP-dependent manner. This chain is Elongation factor 4, found in Psychromonas ingrahamii (strain DSM 17664 / CCUG 51855 / 37).